Here is a 203-residue protein sequence, read N- to C-terminus: Probable NADPH:quinone oxidoreductase 2 (203 aa).

It belongs to the SsuE family. In terms of assembly, homotetramer. FMN serves as cofactor.

It catalyses the reaction a quinone + NADH + H(+) = a quinol + NAD(+). It carries out the reaction a quinone + NADPH + H(+) = a quinol + NADP(+). In terms of biological role, the enzyme apparently serves as a quinone reductase in connection with conjugation reactions of hydroquinones involved in detoxification pathways. In Oryza sativa subsp. japonica (Rice), this protein is Probable NADPH:quinone oxidoreductase 2.